We begin with the raw amino-acid sequence, 407 residues long: Cytochrome P450 NovI (407 aa).

Cysteine 357 lines the heme pocket.

This sequence belongs to the cytochrome P450 family. Heme is required as a cofactor.

It participates in antibiotic biosynthesis; novobiocin biosynthesis. Together with NovH, involved in the formation of a beta-OH-Tyr intermediate in the novobiocin biosynthesis pathway, an aminocoumarin family antibiotic that targets bacterial DNA gyrases. Acts as a cytochrome P450-type monooxygenase with specificity for the tyrosyl-S-NovH acyl enzyme (L-Tyr-S-NovH) to form the beta-OH-Tyr intermediate (L-beta-OH-Tyr-S-NovH). This is Cytochrome P450 NovI (novI) from Streptomyces niveus (Streptomyces spheroides).